The sequence spans 191 residues: Protein adenylyltransferase NmFic (191 aa).

Positions 37–162 constitute a Fido domain; that stretch reads GTTAGLQQIH…NDLELRFLLK (126 aa). ATP is bound by residues Lys-67, 104–107, 112–118, and 140–143; these read NIAH, GNGRSTR, and KTLY. The Inhibitory (S/T)XXXE(G/N) motif signature appears at 182-187; the sequence is SYYYEG. Residue Tyr-183 is modified to O-AMP-tyrosine; in vitro. Glu-186 provides a ligand contact to ATP.

In terms of assembly, homodimer. Auto-AMPylation at Tyr-183 in vitro.

It catalyses the reaction L-tyrosyl-[protein] + ATP = O-(5'-adenylyl)-L-tyrosyl-[protein] + diphosphate. It carries out the reaction L-threonyl-[protein] + ATP = 3-O-(5'-adenylyl)-L-threonyl-[protein] + diphosphate. Adenylyltransferase activity is inhibited by the inhibitory helix present at the C-terminus: Glu-186 binds ATP and competes with ATP-binding at Arg-118, thereby preventing adenylyltransferase activity. Activation dissociates ATP-binding from Glu-186, allowing ordered binding of the entire ATP moiety with the alpha-phosphate in an orientation that is productive for accepting an incoming target hydroxyl side chain. In terms of biological role, adenylyltransferase that mediates the addition of adenosine 5'-monophosphate (AMP) to specific residues of target proteins. This chain is Protein adenylyltransferase NmFic, found in Neisseria meningitidis serogroup B (strain ATCC BAA-335 / MC58).